Here is a 220-residue protein sequence, read N- to C-terminus: Probable GTP-binding protein EngB (220 aa).

One can recognise an EngB-type G domain in the interval Asp41–Leu219. GTP contacts are provided by residues Gly49 to Ser56, Gly76 to Glu80, Asp96 to Gly99, Thr164 to Asp167, and Met197 to Ala200. Residues Ser56 and Thr78 each coordinate Mg(2+).

It belongs to the TRAFAC class TrmE-Era-EngA-EngB-Septin-like GTPase superfamily. EngB GTPase family. The cofactor is Mg(2+).

Necessary for normal cell division and for the maintenance of normal septation. The polypeptide is Probable GTP-binding protein EngB (Hyphomonas neptunium (strain ATCC 15444)).